We begin with the raw amino-acid sequence, 461 residues long: tRNA-2-methylthio-N(6)-dimethylallyladenosine synthase (461 aa).

The MTTase N-terminal domain maps to 18-134 (KHIYIQTLGC…LPDFISRIEK (117 aa)). 6 residues coordinate [4Fe-4S] cluster: cysteine 27, cysteine 63, cysteine 97, cysteine 172, cysteine 176, and cysteine 179. The region spanning 158-388 (CNGQVSSFVT…QALQEQHTLE (231 aa)) is the Radical SAM core domain. One can recognise a TRAM domain in the interval 391–454 (KAMEGKQEDV…LHSLRGEMLC (64 aa)).

It belongs to the methylthiotransferase family. MiaB subfamily. In terms of assembly, monomer. Requires [4Fe-4S] cluster as cofactor.

It localises to the cytoplasm. The catalysed reaction is N(6)-dimethylallyladenosine(37) in tRNA + (sulfur carrier)-SH + AH2 + 2 S-adenosyl-L-methionine = 2-methylsulfanyl-N(6)-dimethylallyladenosine(37) in tRNA + (sulfur carrier)-H + 5'-deoxyadenosine + L-methionine + A + S-adenosyl-L-homocysteine + 2 H(+). Catalyzes the methylthiolation of N6-(dimethylallyl)adenosine (i(6)A), leading to the formation of 2-methylthio-N6-(dimethylallyl)adenosine (ms(2)i(6)A) at position 37 in tRNAs that read codons beginning with uridine. The polypeptide is tRNA-2-methylthio-N(6)-dimethylallyladenosine synthase (Syntrophus aciditrophicus (strain SB)).